The primary structure comprises 162 residues: Phenazine biosynthesis protein PhzA1 (162 aa).

Belongs to the PhzA/PhzB family.

The protein operates within antibiotic biosynthesis; phenazine biosynthesis. Its function is as follows. Involved in the biosynthesis of the antibiotic phenazine, a nitrogen-containing heterocyclic molecule. PhzA1 (operon phzA1B1C1E1F1G1) has a role in the biosynthesis of the phenazine during planktonic growth. The polypeptide is Phenazine biosynthesis protein PhzA1 (Pseudomonas aeruginosa (strain ATCC 15692 / DSM 22644 / CIP 104116 / JCM 14847 / LMG 12228 / 1C / PRS 101 / PAO1)).